A 513-amino-acid polypeptide reads, in one-letter code: GMP synthase [glutamine-hydrolyzing] (513 aa).

Positions S3–D200 constitute a Glutamine amidotransferase type-1 domain. The active-site Nucleophile is C80. Residues H174 and E176 contribute to the active site. The GMPS ATP-PPase domain occupies W201 to R388. S228–T234 provides a ligand contact to ATP.

In terms of assembly, homodimer.

The enzyme catalyses XMP + L-glutamine + ATP + H2O = GMP + L-glutamate + AMP + diphosphate + 2 H(+). The protein operates within purine metabolism; GMP biosynthesis; GMP from XMP (L-Gln route): step 1/1. In terms of biological role, catalyzes the synthesis of GMP from XMP. The protein is GMP synthase [glutamine-hydrolyzing] of Chlorobium phaeobacteroides (strain DSM 266 / SMG 266 / 2430).